The sequence spans 264 residues: Acyl-[acyl-carrier-protein]--UDP-N-acetylglucosamine O-acyltransferase (264 aa).

The protein belongs to the transferase hexapeptide repeat family. LpxA subfamily. As to quaternary structure, homotrimer.

It is found in the cytoplasm. It carries out the reaction a (3R)-hydroxyacyl-[ACP] + UDP-N-acetyl-alpha-D-glucosamine = a UDP-3-O-[(3R)-3-hydroxyacyl]-N-acetyl-alpha-D-glucosamine + holo-[ACP]. The protein operates within glycolipid biosynthesis; lipid IV(A) biosynthesis; lipid IV(A) from (3R)-3-hydroxytetradecanoyl-[acyl-carrier-protein] and UDP-N-acetyl-alpha-D-glucosamine: step 1/6. Functionally, involved in the biosynthesis of lipid A, a phosphorylated glycolipid that anchors the lipopolysaccharide to the outer membrane of the cell. The chain is Acyl-[acyl-carrier-protein]--UDP-N-acetylglucosamine O-acyltransferase from Albidiferax ferrireducens (strain ATCC BAA-621 / DSM 15236 / T118) (Rhodoferax ferrireducens).